The primary structure comprises 443 residues: Amino-acid acetyltransferase (443 aa).

The 141-residue stretch at E296–K436 folds into the N-acetyltransferase domain.

It belongs to the acetyltransferase family. ArgA subfamily. In terms of assembly, homohexamer.

It is found in the cytoplasm. The catalysed reaction is L-glutamate + acetyl-CoA = N-acetyl-L-glutamate + CoA + H(+). Its pathway is amino-acid biosynthesis; L-arginine biosynthesis; N(2)-acetyl-L-ornithine from L-glutamate: step 1/4. The polypeptide is Amino-acid acetyltransferase (Salmonella arizonae (strain ATCC BAA-731 / CDC346-86 / RSK2980)).